The following is a 295-amino-acid chain: MDNKLNIVIITGMSGAGKTVAIQSFEDMGYFTVDNIPPNLIEKFVGLLNTPDNKIDKVALVVDMRSRAFFEDIQSIVTELTDNTSVNFKLLFLDANDTELVSRYKETRRSHPLAIDGRTLDGITKEREILADLKNLSEVVIDTSELTPRNLRARILQKFATSTESTFRIEVMSFGFKYGLPLDADLVFDVRFLPNPHYISELRDKNGTDQEVYDYVMEHPQSEEFYQNLMKMLVPILPAYKKEGKSVLTIAFGCTGGQHRSVAFAERVSAALREKWHLNVSHRDKDRRKETVNRS.

12–19 contacts ATP; sequence GMSGAGKT. Residue 63 to 66 coordinates GTP; that stretch reads DMRS.

It belongs to the RapZ-like family.

In terms of biological role, displays ATPase and GTPase activities. The chain is Nucleotide-binding protein llmg_1557 from Lactococcus lactis subsp. cremoris (strain MG1363).